The chain runs to 502 residues: Archaemetzincin-1 (502 aa).

Residue His262 participates in Zn(2+) binding. The Proton acceptor role is filled by Glu263. His266, Cys273, Cys278, Cys297, and Cys300 together coordinate Zn(2+). The segment at 336–383 (GEPSVSEDTLPFSADSGMGCESDTEPVTSPSEPVTPDGWSHPFPDGPE) is disordered.

This sequence belongs to the peptidase M54 family. The cofactor is Zn(2+).

In terms of biological role, probable zinc metalloprotease. In Mus musculus (Mouse), this protein is Archaemetzincin-1 (Amz1).